The chain runs to 269 residues: Undecaprenyl-diphosphatase (269 aa).

Helical transmembrane passes span 40–59, 87–107, 116–136, 160–180, 188–208, 220–240, and 247–267; these read GITF…ALYF, WYII…EEPI, AIIA…DTLG, ALLP…FLGF, FSFL…VGHL, PLLI…ALLL, and SLYP…LFIF.

The protein belongs to the UppP family.

It localises to the cell inner membrane. It carries out the reaction di-trans,octa-cis-undecaprenyl diphosphate + H2O = di-trans,octa-cis-undecaprenyl phosphate + phosphate + H(+). Catalyzes the dephosphorylation of undecaprenyl diphosphate (UPP). Confers resistance to bacitracin. The sequence is that of Undecaprenyl-diphosphatase from Geobacter metallireducens (strain ATCC 53774 / DSM 7210 / GS-15).